We begin with the raw amino-acid sequence, 646 residues long: Protein real-time (646 aa).

The region spanning 2 to 175 (VQKYESPVRI…FINELKKEGI (174 aa)) is the PRELI/MSF1 domain. Residues 294–471 (TPVVVEKYFP…FLGGSCITMI (178 aa)) form the CRAL-TRIO domain. A GOLD domain is found at 499–646 (HHGLYKSVDL…GFSSNSLQSR (148 aa)).

It is found in the mitochondrion. The sequence is that of Protein real-time from Aedes aegypti (Yellowfever mosquito).